The sequence spans 622 residues: Glutamyl-tRNA(Gln) amidotransferase subunit E (622 aa).

The protein belongs to the GatB/GatE family. GatE subfamily. As to quaternary structure, heterodimer of GatD and GatE.

It catalyses the reaction L-glutamyl-tRNA(Gln) + L-glutamine + ATP + H2O = L-glutaminyl-tRNA(Gln) + L-glutamate + ADP + phosphate + H(+). Its function is as follows. Allows the formation of correctly charged Gln-tRNA(Gln) through the transamidation of misacylated Glu-tRNA(Gln) in organisms which lack glutaminyl-tRNA synthetase. The reaction takes place in the presence of glutamine and ATP through an activated gamma-phospho-Glu-tRNA(Gln). The GatDE system is specific for glutamate and does not act on aspartate. The polypeptide is Glutamyl-tRNA(Gln) amidotransferase subunit E (Halobacterium salinarum (strain ATCC 29341 / DSM 671 / R1)).